A 406-amino-acid chain; its full sequence is N-acetylmuramoyl-L-alanine amidase CwlM (406 aa).

Peptidoglycan-binding domain regions lie at residues Ser-18 to Leu-83 and Gly-105 to Leu-160. The 178-residue stretch at Ile-193–Lys-370 folds into the MurNAc-LAA domain.

Belongs to the N-acetylmuramoyl-L-alanine amidase 3 family.

The protein resides in the periplasm. The catalysed reaction is Hydrolyzes the link between N-acetylmuramoyl residues and L-amino acid residues in certain cell-wall glycopeptides.. It functions in the pathway cell wall degradation; peptidoglycan degradation. Functionally, cell-wall hydrolase that hydrolyzes the amide bond between N-acetylmuramic acid and L-alanine in cell-wall glycopeptides. Is able to lyse whole mycobacteria, release peptidoglycan from the cell wall of M.luteus and M.smegmatis, and cleave N-acetylmuramoyl-L-alanyl-D-isoglutamine, releasing free N-acetylmuramic acid and dipeptide. The chain is N-acetylmuramoyl-L-alanine amidase CwlM from Mycobacterium tuberculosis (strain ATCC 25618 / H37Rv).